The following is a 427-amino-acid chain: Acyl-lipid 8-desaturase (427 aa).

The interval 1 to 24 (MGRGGDSSGQAHPAAELAVPSDRA) is disordered. Residues 36 to 84 (IVLYGKRVDVTKFQRTHPGGSKVFRIFQDRDATEQFESYHSKRAIKMME) enclose the Cytochrome b5 heme-binding domain. Heme-binding residues include His52 and His75. Residues 178–182 (HSVFK) carry the Histidine box-1 motif. Residues 189 to 209 (VGWNNAAGYFLGFVQGYAVEW) form a helical membrane-spanning segment. Residues 213–218 (RHNTHH) carry the Histidine box-2 motif. Transmembrane regions (helical) follow at residues 261 to 281 (VPVMAILDLYWRLESIAYVAM) and 286 to 306 (MLPQALALVAHYAIVAWVFAG). The Histidine box-3 motif lies at 373 to 377 (QTEHH).

This sequence belongs to the fatty acid desaturase type 1 family. It depends on Fe(2+) as a cofactor.

It is found in the membrane. In terms of biological role, fatty acid desaturase that introduces a cis double bond at the 8-position in 20-carbon polyunsaturated fatty acids incorporated in a glycerolipid that contain a Delta(8) double bond to yield (20:4(8,11,14,17)). This chain is Acyl-lipid 8-desaturase, found in Rebecca salina (Marine microalga).